The primary structure comprises 322 residues: tRNA-specific adenosine deaminase subunit TAD3 (322 aa).

Residues 162-283 form the CMP/dCMP-type deaminase domain; sequence EVRNELSRAS…EMQRTGSLKL (122 aa). The Zn(2+) site is built by His216, Cys254, Cys257, and Cys322.

It belongs to the cytidine and deoxycytidylate deaminase family. ADAT3 subfamily. Heterodimer with TAD2.

The protein localises to the cytoplasm. The protein resides in the nucleus. It localises to the peroxisome. Structural subunit of tRNA-specific adenosine deaminase, which deaminates adenosine-34 (the first, also called wobble position of the anticodon) to inosine in many tRNAs. Inosine-34 allows the decoding of 3 different nucleotides at the third position of mRNA codons, as inosine is able to pair with U, C, and A. This Saccharomyces cerevisiae (strain ATCC 204508 / S288c) (Baker's yeast) protein is tRNA-specific adenosine deaminase subunit TAD3 (TAD3).